The following is a 273-amino-acid chain: SPRY domain-containing SOCS box protein 4 (273 aa).

Residues 1–34 (MGQKLSGSLKSVEVREPALRPAKRELRGAEPGRP) are disordered. Positions 12 to 34 (VEVREPALRPAKRELRGAEPGRP) are enriched in basic and acidic residues. Positions 34-233 (PARLDQLLDM…MRYINGLDPE (200 aa)) constitute a B30.2/SPRY domain. Residues 234-273 (PLPLMDLCRRSIRSALGRQRLQDISSLPLPQSLKNYLQYQ) form the SOCS box domain.

The protein belongs to the SPSB family. In terms of assembly, component of the probable ECS(SPSB4) E3 ubiquitin-protein ligase complex which contains CUL5, RNF7/RBX2, Elongin BC complex and SPSB4. Interacts with CUL5; RNF7; ELOB and ELOC. Interacts with MET. Interacts (via B30.2/SPRY domain) with PAWR; this interaction occurs in association with the Elongin BC complex. Interacts with NOS2. Interacts with EPHB2.

The protein resides in the cytoplasm. The protein localises to the cytosol. Its pathway is protein modification; protein ubiquitination. Substrate recognition component of a SCF-like ECS (Elongin BC-CUL2/5-SOCS-box protein) E3 ubiquitin-protein ligase complex which mediates the ubiquitination and subsequent proteasomal degradation of target proteins. Negatively regulates nitric oxide (NO) production and limits cellular toxicity in activated macrophages by mediating the ubiquitination and proteasomal degradation of NOS2. Acts as a bridge which links NOS2 with the ECS E3 ubiquitin ligase complex components ELOC and CUL5. Diminishes EphB2-dependent cell repulsive responses by mediating the ubiquitination and degradation of EphB2/CTF2. Regulates cellular clock function by mediating the ubiquitin/proteasome-dependent degradation of the circadian transcriptional repressor NR1D1. The polypeptide is SPRY domain-containing SOCS box protein 4 (SPSB4) (Homo sapiens (Human)).